Here is a 594-residue protein sequence, read N- to C-terminus: uncharacterized protein (594 aa).

In terms of biological role, the presence of the two linear plasmids, termed pGKL1 and pGKL2, in strains of Kluyveromyces lactis confers the killer phenotype to the host cell, by promoting the secretion of a toxin able to inhibit the growth of sensitive strains. This is an uncharacterized protein from Kluyveromyces lactis (strain ATCC 8585 / CBS 2359 / DSM 70799 / NBRC 1267 / NRRL Y-1140 / WM37) (Yeast).